Reading from the N-terminus, the 121-residue chain is Basic phospholipase A2 homolog textilotoxin B chain (121 aa).

7 disulfides stabilise this stretch: Cys11–Cys72, Cys27–Cys120, Cys29–Cys45, Cys44–Cys101, Cys51–Cys94, Cys61–Cys87, and Cys80–Cys92.

This sequence belongs to the phospholipase A2 family. Group I subfamily. N49 sub-subfamily. Heterohexamer. 2 forms exist: 2 A or 2 B chains, 2 C chains and 2 covalently-linked D chains, and 1 A or 1 B, 1 C, 2 covalently-linked D chains and 2 differentially glycosylated covalently-linked D chains. Textilotoxin was originally described as pentameric. As to expression, expressed by the venom gland.

The protein resides in the secreted. Snake venom oligomeric phospholipase A2 that has potent presynaptic neurotoxicity. Chain B is not itself neurotoxic, but it is essential for the neurotoxicity of textilotoxin. Subunit B possesses a very low phospholipase activity. The sequence is that of Basic phospholipase A2 homolog textilotoxin B chain from Pseudonaja textilis (Eastern brown snake).